The following is a 65-amino-acid chain: Cold shock-like protein CspB (65 aa).

One can recognise a CSD domain in the interval 3 to 62; that stretch reads GKVKWFNNEKGFGFIEMEGSEDVFVHFSAIQSDGYKALEEGQEVSFDITEGNRGPQAANV.

As to quaternary structure, homodimer.

The protein localises to the cytoplasm. This Bacillus cereus protein is Cold shock-like protein CspB (cspB).